The sequence spans 73 residues: Conotoxin Asp7/Gla(3)-TxVI (73 aa).

An N-terminal signal peptide occupies residues 1-19; that stretch reads MQKLIILLLVAAVLMSTQA. Residues 20–44 constitute a propeptide that is removed on maturation; sequence VLQEKRPKEKIKFLSKRKTDAEKQQ. 3 disulfides stabilise this stretch: Cys48–Cys62, Cys55–Cys66, and Cys61–Cys71. Pro49 and Pro54 each carry 4-hydroxyproline. Residue Glu60 is modified to 4-carboxyglutamate. Residue Trp64 is modified to 6'-bromotryptophan.

In terms of tissue distribution, expressed by the venom duct.

It is found in the secreted. The chain is Conotoxin Asp7/Gla(3)-TxVI from Conus textile (Cloth-of-gold cone).